A 172-amino-acid polypeptide reads, in one-letter code: Ribosome maturation factor RimM (172 aa).

The 73-residue stretch at 96-168 (DGEFYYHEII…RIEVELMEGL (73 aa)) folds into the PRC barrel domain.

Belongs to the RimM family. Binds ribosomal protein uS19.

Its subcellular location is the cytoplasm. In terms of biological role, an accessory protein needed during the final step in the assembly of 30S ribosomal subunit, possibly for assembly of the head region. Essential for efficient processing of 16S rRNA. May be needed both before and after RbfA during the maturation of 16S rRNA. It has affinity for free ribosomal 30S subunits but not for 70S ribosomes. This is Ribosome maturation factor RimM from Streptococcus thermophilus (strain ATCC BAA-491 / LMD-9).